Here is a 232-residue protein sequence, read N- to C-terminus: Sugar fermentation stimulation protein homolog (232 aa).

This sequence belongs to the SfsA family.

The protein is Sugar fermentation stimulation protein homolog of Geobacter sulfurreducens (strain ATCC 51573 / DSM 12127 / PCA).